The primary structure comprises 160 residues: Keratin-associated protein 9-6 (160 aa).

16 tandem repeats follow at residues 4 to 8 (CCSPG), 13 to 17 (CCRTT), 18 to 22 (CCRTT), 37 to 41 (CCQPS), 42 to 46 (CCVSS), 47 to 51 (CCQPY), 56 to 60 (CCQNT), 61 to 65 (CCRTT), 66 to 70 (CCQPT), 75 to 79 (CCQPS), 80 to 84 (CCSTP), 90 to 94 (CCGSS), 95 to 99 (CCGQT), 140 to 144 (CCQPC), 149 to 153 (CCVSS), and 154 to 158 (CCQHS). The segment at 4–158 (CCSPGCQPTC…CCVSSCCQHS (155 aa)) is 16 X 5 AA repeats of C-C-[GSVRQ]-[QTSPHN]-[TPSGYC].

The protein belongs to the KRTAP type 9 family. Interacts with hair keratins.

In the hair cortex, hair keratin intermediate filaments are embedded in an interfilamentous matrix, consisting of hair keratin-associated proteins (KRTAP), which are essential for the formation of a rigid and resistant hair shaft through their extensive disulfide bond cross-linking with abundant cysteine residues of hair keratins. The matrix proteins include the high-sulfur and high-glycine-tyrosine keratins. The sequence is that of Keratin-associated protein 9-6 from Homo sapiens (Human).